A 424-amino-acid chain; its full sequence is S-phase kinase-associated protein 2 (424 aa).

The tract at residues 52-73 (PHGLLSNLGHPQSPPRKRVKGK) is disordered. The residue at position 64 (serine 64) is a Phosphoserine. Positions 67–73 (RKRVKGK) match the Nuclear localization signal motif. An N6-acetyllysine; by p300/EP300 mark is found at lysine 68 and lysine 71. A Phosphoserine modification is found at serine 75. Residues 94-140 (GVSWDSLPDELLLGIFSCLCLPELLRVSGVCKRWYRLSLDESLWQSL) form the F-box domain. LRR repeat units lie at residues 151-176 (VTVR…PLGE), 177-204 (SFSS…ILSE), 210-234 (NLSL…NLVR), 235-257 (LNLC…SCSR), 258-284 (LDEL…LPNT), 286-308 (TQLN…IIKR), 309-330 (CPNL…CFPE), 334-356 (LNYL…LLEL), 359-378 (IPTL…TLQL), and 380-401 (REAL…RPTM). The residue at position 179 (serine 179) is a Phosphoserine.

As to quaternary structure, part of a SCF(SKP2) complex consisting of CUL1, RBX1, SKP1 and SKP2. Component of a SCF(SKP2)-like complex containing CUL1, SKP1, TRIM21 and SKP2. Interacts directly with CUL1 and SKP1. Interacts with ASB2 which is the substrate-recognition component of a probable ECS E3 ubiquitin-protein ligase complex; ASB2 is likely to bridge the formation of dimeric E3-ubiquitin-protein ligase complexes composed of an ECS complex and an SCF(SKP2) complex. Interacts with CKS1. Interacts with the cyclin-A-CDK2 complex. Interacts with ORC1, phosphorylated CDT1, phosphorylated RBL2, ELF4, phosphorylated RAG2, FOXO1, UBP43, MYC, TOB1, TAL1 and KMT2A/MLL1. Interacts with TRIM21. Interacts with cyclin-E. Interacts with CARM1. Post-translationally, phosphorylated on serine and threonine resudues in response to DNA damage, promoting 'Lys-63'-linked ubiquitination of NBN. Ubiquitinated by the APC/C complex, leading to its degradation by the proteasome. Deubiquitinated by USP13. In terms of processing, acetylation at Lys-68 and Lys-71 increases stability through impairment of APC/C-mediated proteolysis and promotes cytoplasmic retention. Deacetylated by SIRT3.

Its subcellular location is the cytoplasm. It localises to the nucleus. The protein operates within protein modification; protein ubiquitination. Functionally, substrate recognition component of a SCF (SKP1-CUL1-F-box protein) E3 ubiquitin-protein ligase complex which mediates the ubiquitination and subsequent proteasomal degradation of target proteins involved in cell cycle progression, signal transduction and transcription. Specifically recognizes phosphorylated CDKN1B/p27kip and is involved in regulation of G1/S transition. Degradation of CDKN1B/p27kip also requires CKS1. Recognizes target proteins ORC1, CDT1, RBL2, KMT2A/MLL1, CDK9, RAG2, NBN, FOXO1, UBP43, YTHDF2, and probably MYC, TOB1 and TAL1. Degradation of TAL1 also requires STUB1. Recognizes CDKN1A in association with CCNE1 or CCNE2 and CDK2. Promotes ubiquitination and destruction of CDH1 in a CK1-dependent manner, thereby regulating cell migration. Following phosphorylation in response to DNA damage, mediates 'Lys-63'-linked ubiquitination of NBN, promoting ATM recruitment to DNA damage sites and DNA repair via homologous recombination. Through the ubiquitin-mediated proteasomal degradation of viral proteins may have an antiviral activity. This chain is S-phase kinase-associated protein 2 (Skp2), found in Mus musculus (Mouse).